A 520-amino-acid polypeptide reads, in one-letter code: Succinyl-CoA:3-ketoacid coenzyme A transferase 2B, mitochondrial (520 aa).

The N-terminal 39 residues, 1 to 39, are a transit peptide targeting the mitochondrion; sequence MAALRLLAWALPRGVSALRPRPALPHRLIRRYVSDRSGS. A disordered region spans residues 280–299; it reads ERLTTRDSKPAPGSKDNDPS. Glutamate 342 acts as the 5-glutamyl coenzyme A thioester intermediate in catalysis.

Belongs to the 3-oxoacid CoA-transferase family. In terms of assembly, homodimer. As to expression, testis specific. Expressed in late spermatids. Accumulates during spermiogenesis. Also detected in the midpiece of spermatozoa.

The protein resides in the mitochondrion. It catalyses the reaction a 3-oxo acid + succinyl-CoA = a 3-oxoacyl-CoA + succinate. Its pathway is ketone metabolism; succinyl-CoA degradation; acetoacetyl-CoA from succinyl-CoA: step 1/1. Functionally, key enzyme for ketone body catabolism. Transfers the CoA moiety from succinate to acetoacetate. Formation of the enzyme-CoA intermediate proceeds via an unstable anhydride species formed between the carboxylate groups of the enzyme and substrate. Probably play and important roles in the energy metabolism of spermatozoa. The protein is Succinyl-CoA:3-ketoacid coenzyme A transferase 2B, mitochondrial (Oxct2b) of Mus musculus (Mouse).